A 505-amino-acid polypeptide reads, in one-letter code: AMP phosphorylase (505 aa).

Residues glycine 170, 196–201 (SRAITS), and threonine 205 each bind AMP. The active-site Proton donor is the aspartate 258. The AMP site is built by serine 266 and lysine 290.

This sequence belongs to the thymidine/pyrimidine-nucleoside phosphorylase family. Type 2 subfamily.

It carries out the reaction AMP + phosphate = alpha-D-ribose 1,5-bisphosphate + adenine. The catalysed reaction is CMP + phosphate = cytosine + alpha-D-ribose 1,5-bisphosphate. It catalyses the reaction UMP + phosphate = alpha-D-ribose 1,5-bisphosphate + uracil. In terms of biological role, catalyzes the conversion of AMP and phosphate to adenine and ribose 1,5-bisphosphate (R15P). Exhibits phosphorylase activity toward CMP and UMP in addition to AMP. Functions in an archaeal AMP degradation pathway, together with R15P isomerase and RubisCO. The protein is AMP phosphorylase of Methanococcus maripaludis (strain C5 / ATCC BAA-1333).